The following is a 315-amino-acid chain: Rab effector Noc2 (315 aa).

Positions 41 to 158 (QRRKQHLSPA…KRSGAWFYKG (118 aa)) constitute a RabBD domain. The FYVE-type zinc finger occupies 89–146 (GNGLSQCLLCGEVLGFLGSSSVFCKDCRKKVCTKCGIEASPGQKRPLWLCKICSEQRE). 8 residues coordinate Zn(2+): Cys95, Cys98, Cys112, Cys115, Cys120, Cys123, Cys138, and Cys141. Positions 170–315 (GRADDPHFRP…APAGPSSCLG (146 aa)) are disordered. Composition is skewed to basic and acidic residues over residues 184 to 193 (PAEREPRSSE) and 221 to 240 (LEDR…KPWK). The segment covering 262–275 (GCQSSLASGETGTG) has biased composition (polar residues). A compositionally biased stretch (low complexity) spans 298-315 (GRAPAADAAPAGPSSCLG).

Recruited to dense-core vesicles through specific interaction with RAB27A in endocrine cells. Interacts with RAB3A, RAB3B, RAB3C and RAB3D. Interacts with ZYX. Moderate to high levels of expression in thyroid, ovary, stomach, heart, pancreas, skeletal muscle, kidney and liver. Also detected in epithelial cells.

Its subcellular location is the cytoplasm. It is found in the cytoplasmic vesicle. The protein resides in the secretory vesicle membrane. Functionally, rab GTPase effector involved in the late steps of regulated exocytosis, both in endocrine and exocrine cells. Acts as a potential RAB3B effector protein in epithelial cells. The protein is Rab effector Noc2 (RPH3AL) of Homo sapiens (Human).